We begin with the raw amino-acid sequence, 692 residues long: Glycine--tRNA ligase beta subunit (692 aa).

Belongs to the class-II aminoacyl-tRNA synthetase family. Tetramer of two alpha and two beta subunits.

It localises to the cytoplasm. The enzyme catalyses tRNA(Gly) + glycine + ATP = glycyl-tRNA(Gly) + AMP + diphosphate. This Hahella chejuensis (strain KCTC 2396) protein is Glycine--tRNA ligase beta subunit.